We begin with the raw amino-acid sequence, 409 residues long: Transforming growth factor beta regulator 1 (409 aa).

Residues 1-13 are compositionally biased toward polar residues; it reads MNHSPATTFSPHS. 2 disordered regions span residues 1–31 and 127–162; these read MNHS…KSHK and GGSC…TEGT. Over residues 21 to 31 the composition is skewed to basic residues; that stretch reads RNKKSTKKSHK. Basic and acidic residues predominate over residues 136-150; it reads DKREKGKENKSEAMK. The 60-residue stretch at 179-238 folds into the FYR N-terminal domain; sequence VFPIVLEGLTVYSLGEIISDRAGFHEKVAIYPVGFCSTRVYVGMKNPDQKCLYTCQIKDG. One can recognise an FYR C-terminal domain in the interval 239–318; sequence GTGPQFEIVP…RKCTGYQWVK (80 aa).

It belongs to the TBRG1 family.

The protein resides in the nucleus. Functionally, may act as a growth inhibitor. May be involved in maintaining chromosomal stability. The sequence is that of Transforming growth factor beta regulator 1 (tbrg1) from Xenopus tropicalis (Western clawed frog).